Consider the following 205-residue polypeptide: Holliday junction branch migration complex subunit RuvA (205 aa).

A domain I region spans residues 1 to 64 (MIGRLRGIIL…EDAQLLFGFN (64 aa)). A domain II region spans residues 65 to 142 (DKQERALFRE…KGLSGDLFNP (78 aa)). Positions 143–156 (VSDIPLASPASAES) are flexible linker. Residues 157–205 (RASDPEAEAAAALVALGYKPQEASRMISKIARPEADCETLIRDALRAAL) are domain III.

Belongs to the RuvA family. In terms of assembly, homotetramer. Forms an RuvA(8)-RuvB(12)-Holliday junction (HJ) complex. HJ DNA is sandwiched between 2 RuvA tetramers; dsDNA enters through RuvA and exits via RuvB. An RuvB hexamer assembles on each DNA strand where it exits the tetramer. Each RuvB hexamer is contacted by two RuvA subunits (via domain III) on 2 adjacent RuvB subunits; this complex drives branch migration. In the full resolvosome a probable DNA-RuvA(4)-RuvB(12)-RuvC(2) complex forms which resolves the HJ.

It is found in the cytoplasm. Functionally, the RuvA-RuvB-RuvC complex processes Holliday junction (HJ) DNA during genetic recombination and DNA repair, while the RuvA-RuvB complex plays an important role in the rescue of blocked DNA replication forks via replication fork reversal (RFR). RuvA specifically binds to HJ cruciform DNA, conferring on it an open structure. The RuvB hexamer acts as an ATP-dependent pump, pulling dsDNA into and through the RuvAB complex. HJ branch migration allows RuvC to scan DNA until it finds its consensus sequence, where it cleaves and resolves the cruciform DNA. In Pectobacterium carotovorum subsp. carotovorum (strain PC1), this protein is Holliday junction branch migration complex subunit RuvA.